The primary structure comprises 536 residues: Bifunctional purine biosynthesis protein PurH (536 aa).

The region spanning 8–158 is the MGS-like domain; it reads IPAPDEVRIK…KNHAYVTVVT (151 aa).

It belongs to the PurH family.

It catalyses the reaction (6R)-10-formyltetrahydrofolate + 5-amino-1-(5-phospho-beta-D-ribosyl)imidazole-4-carboxamide = 5-formamido-1-(5-phospho-D-ribosyl)imidazole-4-carboxamide + (6S)-5,6,7,8-tetrahydrofolate. The enzyme catalyses IMP + H2O = 5-formamido-1-(5-phospho-D-ribosyl)imidazole-4-carboxamide. The protein operates within purine metabolism; IMP biosynthesis via de novo pathway; 5-formamido-1-(5-phospho-D-ribosyl)imidazole-4-carboxamide from 5-amino-1-(5-phospho-D-ribosyl)imidazole-4-carboxamide (10-formyl THF route): step 1/1. It functions in the pathway purine metabolism; IMP biosynthesis via de novo pathway; IMP from 5-formamido-1-(5-phospho-D-ribosyl)imidazole-4-carboxamide: step 1/1. This is Bifunctional purine biosynthesis protein PurH from Sinorhizobium medicae (strain WSM419) (Ensifer medicae).